The primary structure comprises 176 residues: Bifunctional protein PyrR (176 aa).

The PRPP-binding signature appears at 93–105 (VILVDDVLYTGRT).

This sequence belongs to the purine/pyrimidine phosphoribosyltransferase family. PyrR subfamily. Homodimer and homohexamer; in equilibrium.

It carries out the reaction UMP + diphosphate = 5-phospho-alpha-D-ribose 1-diphosphate + uracil. Its function is as follows. Regulates transcriptional attenuation of the pyrimidine nucleotide (pyr) operon by binding in a uridine-dependent manner to specific sites on pyr mRNA. This disrupts an antiterminator hairpin in the RNA and favors formation of a downstream transcription terminator, leading to a reduced expression of downstream genes. Functionally, also displays a weak uracil phosphoribosyltransferase activity which is not physiologically significant. This is Bifunctional protein PyrR from Streptococcus mutans serotype c (strain ATCC 700610 / UA159).